Here is a 149-residue protein sequence, read N- to C-terminus: uncharacterized protein (149 aa).

Residues 111–140 adopt a coiled-coil conformation; it reads HKALEKATELIENEEELLKREGIKRENLKF.

This is an uncharacterized protein from Aquifex aeolicus (strain VF5).